The primary structure comprises 509 residues: Pyruvate kinase (509 aa).

Ser29 is modified (phosphoserine). Arg56 contributes to the substrate binding site. 2 residues coordinate K(+): Asn58 and Ser60. ATP is bound at residue 58 to 61 (NFSH). Residue Ser63 is modified to Phosphoserine. Residues Asp91 and Thr92 each coordinate K(+). 2 residues coordinate ATP: Arg98 and Lys184. Position 249 (Glu249) interacts with Mg(2+). Gly272 and Asp273 together coordinate substrate. Asp273 is a Mg(2+) binding site. Ser281 carries the phosphoserine modification. Residue Thr305 participates in substrate binding. The residue at position 412 (Ser412) is a Phosphoserine.

The protein belongs to the pyruvate kinase family. As to quaternary structure, homotetramer. The cofactor is Mg(2+). It depends on K(+) as a cofactor.

It carries out the reaction pyruvate + ATP = phosphoenolpyruvate + ADP + H(+). The protein operates within carbohydrate degradation; glycolysis; pyruvate from D-glyceraldehyde 3-phosphate: step 5/5. The protein is Pyruvate kinase (pyk1) of Schizosaccharomyces pombe (strain 972 / ATCC 24843) (Fission yeast).